A 230-amino-acid chain; its full sequence is Cysteine S-methyltransferase OspZ (230 aa).

The segment at 49–52 is interaction with host proteins TAB2, TAB3 and ZRANB3; the sequence is GITR. S-adenosyl-L-methionine-binding residues include alanine 92, serine 98, arginine 107, glutamine 111, tyrosine 204, and glutamate 208.

This sequence belongs to the NleE/OspZ family. In terms of assembly, monomer.

Its subcellular location is the secreted. The protein localises to the host cytoplasm. It localises to the host nucleus. It catalyses the reaction L-cysteinyl-[protein] + S-adenosyl-L-methionine = S-methyl-L-cysteinyl-[protein] + S-adenosyl-L-homocysteine + H(+). Functionally, cysteine methyltransferase effector that inhibits host cell NF-kappa-B activation by preventing nuclear translocation of host protein RELA/p65. Acts by mediating cysteine methylation of host proteins TAB2 and TAB3: methylation of a conserved cysteine residue of the RanBP2-type zinc finger (NZF) of TAB2 and TAB3 disrupts zinc-binding, thereby inactivating the ubiquitin chain-binding activity of TAB2 and TAB3, leading to NF-kappa-B inactivation. Also mediates cysteine methylation of host protein ZRANB3, inactivating its ability to bind ubiquitin chains. The protein is Cysteine S-methyltransferase OspZ of Shigella boydii.